A 406-amino-acid polypeptide reads, in one-letter code: Putative permease Rv2963 (406 aa).

The next 9 helical transmembrane spans lie at 30–50, 67–87, 111–131, 132–152, 208–228, 246–266, 278–298, 312–332, and 361–381; these read WEIL…QAVV, LVIA…AVAL, LVVE…TAAE, FVGG…FVGA, LAIL…AAWV, AVWG…CSIG, GISF…LPIL, VLLG…ELLF, and VIFL…GGLP.

Belongs to the UPF0718 family.

It localises to the cell membrane. In Mycobacterium tuberculosis (strain ATCC 25618 / H37Rv), this protein is Putative permease Rv2963.